The primary structure comprises 334 residues: UL-16 binding protein 5 (334 aa).

Residues 1 to 25 form the signal peptide; that stretch reads MAAAASPAFLLRLPLLLLLSSWCRT. Topologically, residues 26 to 223 are extracellular; that stretch reads GLADPHSLCY…TMSSGTAQPR (198 aa). Residues 29–117 are MHC class I alpha-1 like; the sequence is DPHSLCYDIT…IQLENYIPKE (89 aa). A disulfide bond links Cys-50 and Cys-66. Residue Asn-82 is glycosylated (N-linked (GlcNAc...) asparagine). The segment at 118–210 is MHC class I alpha-2 like; that stretch reads PLTLQARMSC…MDSTLEPSAG (93 aa). Cysteines 127 and 190 form a disulfide. Residue Gly-218 is the site of GPI-anchor amidated glycine attachment. The propeptide at 219 to 334 is removed in mature form; sequence TAQPRATATT…YSEPLQVSIS (116 aa). The chain crosses the membrane as a helical span at residues 224-243; it reads ATATTLILCCLLIMCLLICS. Topologically, residues 244 to 334 are cytoplasmic; that stretch reads RHSLTQSHGH…YSEPLQVSIS (91 aa).

It belongs to the MHC class I family. In terms of assembly, interacts with KLRK1/NKG2D. As to quaternary structure, (Microbial infection) In CMV-infected cells, interacts with the viral glycoprotein UL16; this interaction causes RAET1G retention in the endoplasmic reticulum and cis-Golgi and prevents binding to and activation of KLRK1/NKG2D, providing CMV with an immune evasion mechanism. In terms of processing, the functional form is cleaved C-terminally of the GPI-anchor and yields a 28 kDa protein. Isoform 1 is highly expressed in colon and in a number of tumor cell lines and highly restricted in normal tissues. Both isoforms are frequently expressed in cell lines derived from epithelial cancers, and in primary breast cancers.

The protein resides in the cell membrane. It localises to the endoplasmic reticulum. It is found in the secreted. Functionally, binds and activates the KLRK1/NKG2D receptor, mediating natural killer cell cytotoxicity. In terms of biological role, down-regulates the expression of KLRK1 and stimulates natural killer cells to secrete IFNG. Its function is as follows. Stimulates natural killer cells to secrete IFNG. The polypeptide is UL-16 binding protein 5 (Homo sapiens (Human)).